Here is a 396-residue protein sequence, read N- to C-terminus: 1-deoxy-D-xylulose 5-phosphate reductoisomerase (396 aa).

Residues Thr-10, Gly-11, Ser-12, Ile-13, and Asn-123 each contribute to the NADPH site. Lys-124 serves as a coordination point for 1-deoxy-D-xylulose 5-phosphate. Glu-125 serves as a coordination point for NADPH. Asp-149 provides a ligand contact to Mn(2+). 1-deoxy-D-xylulose 5-phosphate contacts are provided by Ser-150, Glu-151, Ser-185, and His-208. Position 151 (Glu-151) interacts with Mn(2+). Residue Gly-214 coordinates NADPH. Residues Ser-221, Asn-226, Lys-227, and Glu-230 each coordinate 1-deoxy-D-xylulose 5-phosphate. Residue Glu-230 coordinates Mn(2+).

This sequence belongs to the DXR family. Mg(2+) is required as a cofactor. The cofactor is Mn(2+).

The enzyme catalyses 2-C-methyl-D-erythritol 4-phosphate + NADP(+) = 1-deoxy-D-xylulose 5-phosphate + NADPH + H(+). It participates in isoprenoid biosynthesis; isopentenyl diphosphate biosynthesis via DXP pathway; isopentenyl diphosphate from 1-deoxy-D-xylulose 5-phosphate: step 1/6. Functionally, catalyzes the NADPH-dependent rearrangement and reduction of 1-deoxy-D-xylulose-5-phosphate (DXP) to 2-C-methyl-D-erythritol 4-phosphate (MEP). In Shewanella baltica (strain OS223), this protein is 1-deoxy-D-xylulose 5-phosphate reductoisomerase.